The primary structure comprises 435 residues: Zinc finger CCCH domain-containing protein 10 (435 aa).

The segment at Met-1 to Ala-36 is disordered. Over residues Gly-12–Gly-35 the composition is skewed to gly residues. 3 C3H1-type zinc fingers span residues Ala-36 to Met-63, Lys-73 to Lys-99, and Lys-134 to Arg-161. A disordered region spans residues Asp-166–Leu-190. The span at Arg-168–Thr-179 shows a compositional bias: gly residues. Omega-N-methylarginine is present on residues Arg-186 and Arg-187. Positions Gly-235–Lys-281 form a coiled coil. The span at Thr-315–Glu-331 shows a compositional bias: polar residues. The tract at residues Thr-315–Ile-363 is disordered. Positions Ala-340–Leu-359 are enriched in pro residues.

It is found in the nucleus. Functionally, specific regulator of miRNA biogenesis. Binds, via the C3H1-type zinc finger domains, to the binding motif 5'-GCAGCGC-3' on microRNA pri-MIR143 and negatively regulates the processing to mature microRNA. The chain is Zinc finger CCCH domain-containing protein 10 (Zc3h10) from Mus musculus (Mouse).